The sequence spans 151 residues: Peptide methionine sulfoxide reductase MsrB (151 aa).

One can recognise a MsrB domain in the interval 5–127 (KEERLKQLTR…NSAALRFVPK (123 aa)). The active-site Nucleophile is the C116.

This sequence belongs to the MsrB Met sulfoxide reductase family.

It carries out the reaction L-methionyl-[protein] + [thioredoxin]-disulfide + H2O = L-methionyl-(R)-S-oxide-[protein] + [thioredoxin]-dithiol. The protein is Peptide methionine sulfoxide reductase MsrB of Bacillus licheniformis (strain ATCC 14580 / DSM 13 / JCM 2505 / CCUG 7422 / NBRC 12200 / NCIMB 9375 / NCTC 10341 / NRRL NRS-1264 / Gibson 46).